A 415-amino-acid polypeptide reads, in one-letter code: BTB/POZ and MATH domain-containing protein 6 (415 aa).

The disordered stretch occupies residues 1–33 (MSKLMTRTSGSSSPNTIPDQIESPTSSRSVTQT). One can recognise an MATH domain in the interval 35–169 (NGSHQFVIQG…DDCLKINCTV (135 aa)). Residues 205 to 271 (SDVTFDVAGE…MYKDSLPGDV (67 aa)) enclose the BTB domain. A disordered region spans residues 385 to 415 (SSSGGGKSQSVWAQLSNGGETSSRRVRQRTT). The segment covering 392–405 (SQSVWAQLSNGGET) has biased composition (polar residues).

It belongs to the Tdpoz family. In terms of assembly, heterodimer with BPM1. Interacts with RAP2-4. Interacts with CUL3A. Binds to MYB56 at the promoter of FLOWERING LOCUS T (FT). In terms of tissue distribution, ubiquitous.

Its subcellular location is the nucleus. It is found in the cytoplasm. It functions in the pathway protein modification; protein ubiquitination. May act as a substrate-specific adapter of an E3 ubiquitin-protein ligase complex (CUL3-RBX1-BTB) which mediates the ubiquitination and subsequent proteasomal degradation of target proteins. This chain is BTB/POZ and MATH domain-containing protein 6 (BPM6), found in Arabidopsis thaliana (Mouse-ear cress).